Reading from the N-terminus, the 453-residue chain is Tubulin delta chain (453 aa).

143–149 (AGGTGSG) lines the GTP pocket.

The protein belongs to the tubulin family. As to quaternary structure, found in a complex with TEDC1, TEDC2, TUBE1 and TUBD1.

Its subcellular location is the nucleus. It is found in the cytoplasm. It localises to the cytoskeleton. The protein resides in the microtubule organizing center. The protein localises to the centrosome. Its subcellular location is the centriole. It is found in the cell projection. It localises to the cilium. In terms of biological role, acts as a positive regulator of hedgehog signaling and regulates ciliary function. The sequence is that of Tubulin delta chain (TUBD1) from Canis lupus familiaris (Dog).